A 190-amino-acid polypeptide reads, in one-letter code: Lipid A acyltransferase PagP (190 aa).

Residues 1–18 (MKRLISCLTIICALNASA) form the signal peptide. Residues His60, Asp103, and Ser104 contribute to the active site.

It belongs to the lipid A palmitoyltransferase family. Homodimer.

The protein resides in the cell outer membrane. The enzyme catalyses a lipid A + a 1,2-diacyl-sn-glycero-3-phosphocholine = a hepta-acyl lipid A + a 2-acyl-sn-glycero-3-phosphocholine. It carries out the reaction a lipid IVA + a 1,2-diacyl-sn-glycero-3-phosphocholine = a lipid IVB + a 2-acyl-sn-glycero-3-phosphocholine. It catalyses the reaction a lipid IIA + a 1,2-diacyl-sn-glycero-3-phosphocholine = a lipid IIB + a 2-acyl-sn-glycero-3-phosphocholine. Transfers a fatty acid residue from the sn-1 position of a phospholipid to the N-linked hydroxyfatty acid chain on the proximal unit of lipid A or its precursors. This Legionella pneumophila (strain Corby) protein is Lipid A acyltransferase PagP.